The following is a 277-amino-acid chain: Bleomycin hydrolase (277 aa).

Cys53 is a catalytic residue.

This sequence belongs to the peptidase C1 family. As to quaternary structure, homohexamer. Interacts with NUDT12 (via ANK repeats).

It localises to the cytoplasm. The protein localises to the cytoplasmic granule. The catalysed reaction is Inactivates bleomycin B2 (a cytotoxic glycometallopeptide) by hydrolysis of a carboxyamide bond of beta-aminoalanine, but also shows general aminopeptidase activity. The specificity varies somewhat with source, but amino acid arylamides of Met, Leu and Ala are preferred.. Strongly inhibited by leupeptin, puromycin, NEM, and divalent cations. The normal physiological role of BLM hydrolase is unknown, but it catalyzes the inactivation of the antitumor drug BLM (a glycopeptide) by hydrolyzing the carboxamide bond of its B-aminoalaninamide moiety thus protecting normal and malignant cells from BLM toxicity. The chain is Bleomycin hydrolase (BLMH) from Oryctolagus cuniculus (Rabbit).